Reading from the N-terminus, the 187-residue chain is Adenine phosphoribosyltransferase (187 aa).

This sequence belongs to the purine/pyrimidine phosphoribosyltransferase family. As to quaternary structure, homodimer.

The protein localises to the cytoplasm. It carries out the reaction AMP + diphosphate = 5-phospho-alpha-D-ribose 1-diphosphate + adenine. Its pathway is purine metabolism; AMP biosynthesis via salvage pathway; AMP from adenine: step 1/1. Functionally, catalyzes a salvage reaction resulting in the formation of AMP, that is energically less costly than de novo synthesis. This chain is Adenine phosphoribosyltransferase, found in Burkholderia pseudomallei (strain 668).